The following is a 258-amino-acid chain: Thiamine thiazole synthase (258 aa).

NAD(+) is bound by residues alanine 36, 55 to 56, glycine 63, valine 127, and 154 to 156; these read EK and HVD. 2 residues coordinate Fe cation: aspartate 156 and histidine 171. Residue methionine 224 coordinates NAD(+). Residue arginine 234 coordinates glycine.

This sequence belongs to the THI4 family. Homooctamer; tetramer of dimers. The cofactor is Fe(2+).

The enzyme catalyses hydrogen sulfide + glycine + NAD(+) = ADP-5-ethyl-4-methylthiazole-2-carboxylate + nicotinamide + 3 H2O + H(+). The protein operates within cofactor biosynthesis; thiamine diphosphate biosynthesis. Functionally, involved in the biosynthesis of the thiazole moiety of thiamine. Catalyzes the conversion of NAD and glycine to adenosine diphosphate 5-(2-hydroxyethyl)-4-methylthiazole-2-carboxylate (ADT), an adenylated thiazole intermediate, using free sulfide as a source of sulfur. This is Thiamine thiazole synthase from Methanococcoides burtonii (strain DSM 6242 / NBRC 107633 / OCM 468 / ACE-M).